A 244-amino-acid chain; its full sequence is Small ribosomal subunit protein uS3 (244 aa).

In terms of domain architecture, KH type-2 spans 39–107 (VREMLRKKLA…PAHINVTEVR (69 aa)). Positions 213 to 244 (VGQEKQDDSPRNDRNDRGDRGDRPSRPAREAR) are disordered. Positions 216–244 (EKQDDSPRNDRNDRGDRGDRPSRPAREAR) are enriched in basic and acidic residues.

The protein belongs to the universal ribosomal protein uS3 family. Part of the 30S ribosomal subunit. Forms a tight complex with proteins S10 and S14.

Binds the lower part of the 30S subunit head. Binds mRNA in the 70S ribosome, positioning it for translation. The chain is Small ribosomal subunit protein uS3 from Xanthomonas axonopodis pv. citri (strain 306).